Reading from the N-terminus, the 517-residue chain is Gallate 1-beta-glucosyltransferase 84A24 (517 aa).

The active-site Proton acceptor is the histidine 19. Histidine 19 contacts an anthocyanidin. UDP-alpha-D-glucose is bound by residues glutamine 344, histidine 359, tryptophan 362, asparagine 363, serine 364, and glutamate 367. Glycine 382 serves as a coordination point for an anthocyanidin. Residues aspartate 383 and glutamine 384 each coordinate UDP-alpha-D-glucose.

Belongs to the UDP-glycosyltransferase family. Highly expressed in leaf. Also expressed in peel, stem, root and aril.

The protein resides in the cytoplasm. It catalyses the reaction 3,4,5-trihydroxybenzoate + UDP-alpha-D-glucose = 1-O-galloyl-beta-D-glucose + UDP. It carries out the reaction 3,4-dihydroxybenzoate + UDP-alpha-D-glucose = 1-O-(3,4-dihydroxy-benzoyl)-beta-D-glucose + UDP. The catalysed reaction is 4-hydroxybenzoate + UDP-alpha-D-glucose = 4-(beta-D-glucosyloxy)benzoate + UDP + H(+). The enzyme catalyses (E)-cinnamate + UDP-alpha-D-glucose = 1-O-(trans-cinnamoyl)-beta-D-glucose + UDP. It catalyses the reaction (E)-sinapate + UDP-alpha-D-glucose = 1-O-(trans-sinapoyl)-beta-D-glucose + UDP. It carries out the reaction (E)-4-coumarate + UDP-alpha-D-glucose = 1-O-(trans-4-coumaroyl)-beta-D-glucose + UDP. The catalysed reaction is (E)-caffeate + UDP-alpha-D-glucose = 1-O-[(E)-caffeoyl]-beta-D-glucose + UDP. The enzyme catalyses (E)-ferulate + UDP-alpha-D-glucose = 1-O-[(E)-feruloyl]-beta-D-glucose + UDP. It catalyses the reaction genistein + UDP-alpha-D-glucose = genistein 7-O-beta-D-glucoside + UDP + H(+). It carries out the reaction apigenin + UDP-alpha-D-glucose = apigenin 7-O-beta-D-glucoside + UDP + H(+). The catalysed reaction is luteolin + UDP-alpha-D-glucose = luteolin 7-O-beta-D-glucoside + UDP + H(+). Glucosyltransferase that catalyzes the formation of 1-O-beta-D-glucose esters with hydroxybenzoic acids and cinnamic acid including its derivatives as preferred glucosyl acceptors. Has significant activity with gallic acid (3,4,5-trihydroxybenzoic acid), 3,4-dihydroxybenzoic acid, 4-hydroxybenzoic acid, cinnamic acid, sinapic acid, coumaric acid, caffeic acid and ferulic acid in vitro. Gallic acid is the predicted native substrate of the enzyme, which thus catalyzes the formation of 1-O-galloyl-beta-D-glucose, the first committed step of hydrolyzable tannins (HTs) biosynthesis, with punicalagin isomers being the major HTs of pomegranate. Catalyzes the formation of flavonoid glucosides with genistein, apigenin and luteolin in vitro. Has low activity with benzoic acid, 2-hydroxybenzoic acid, 3-hydroxybenzoic acid, 2,4-dihydroxybenzoic acid, naringenin and quercetin. No activity with catechol, resveratrol, chlorogenic acid, catechin and epicatechin (building blocks of proanthocyanidins) or cyanidin, delphinidin and pelargonidin (the three anthocyanidins). This Punica granatum (Pomegranate) protein is Gallate 1-beta-glucosyltransferase 84A24.